A 68-amino-acid polypeptide reads, in one-letter code: Small ribosomal subunit protein bS21 (68 aa).

Residues 39–68 (PPSVKRVRKKQESERRHRKERAMRRRMMEE) are disordered. Over residues 54–68 (RHRKERAMRRRMMEE) the composition is skewed to basic residues.

It belongs to the bacterial ribosomal protein bS21 family.

The sequence is that of Small ribosomal subunit protein bS21 from Orientia tsutsugamushi (strain Boryong) (Rickettsia tsutsugamushi).